Consider the following 388-residue polypeptide: Protein-glutamate methylesterase/protein-glutamine glutaminase 1 (388 aa).

The 118-residue stretch at 4–121 (QVLVVDDSSF…ATNKDEAIRL (118 aa)) folds into the Response regulatory domain. A 4-aspartylphosphate modification is found at Asp55. A disordered region spans residues 149–190 (SARAGLSSTSPTLGSSTLGRSPASGLASSASRNSPTVSTPAS). Residues 153–169 (GLSSTSPTLGSSTLGRS) show a composition bias toward low complexity. Residues 174–189 (LASSASRNSPTVSTPA) show a composition bias toward polar residues. Residues 188 to 388 (PASAIRASGK…EAILKESGRG (201 aa)) form the CheB-type methylesterase domain. Active-site residues include Ser207, His234, and Asp330.

Belongs to the CheB family. In terms of processing, phosphorylated by CheA. Phosphorylation of the N-terminal regulatory domain activates the methylesterase activity.

The protein resides in the cytoplasm. It catalyses the reaction [protein]-L-glutamate 5-O-methyl ester + H2O = L-glutamyl-[protein] + methanol + H(+). The catalysed reaction is L-glutaminyl-[protein] + H2O = L-glutamyl-[protein] + NH4(+). Involved in chemotaxis. Part of a chemotaxis signal transduction system that modulates chemotaxis in response to various stimuli. Catalyzes the demethylation of specific methylglutamate residues introduced into the chemoreceptors (methyl-accepting chemotaxis proteins or MCP) by CheR. Also mediates the irreversible deamidation of specific glutamine residues to glutamic acid. The sequence is that of Protein-glutamate methylesterase/protein-glutamine glutaminase 1 from Shewanella denitrificans (strain OS217 / ATCC BAA-1090 / DSM 15013).